Reading from the N-terminus, the 419-residue chain is Hydrolase LUC6 (419 aa).

Ser238 is an active-site residue.

Belongs to the AB hydrolase superfamily. FUS2 hydrolase family.

Its pathway is mycotoxin biosynthesis. In terms of biological role, hydrolase; part of the gene cluster that mediates the biosynthesis of the mycotoxin lucilactaene and the lucilactaene-related compound NG-391 that act as cell cycle inhibitors with potent growth inhibitory activity against malarial parasites, moderate growth inhibitory activity against cancer cells, and no activity against bacteria and fungi. Within the pathway, LUC6 may catalyze the 2-pyrrolidone ring formation to form prelucilactaene C from prelucilactaene B, followed by C-15 hydroxylation by the same enzyme to give prelucilactaene D, epoxydation to yield prelucilactaene E, and finally cyclization to yield prelucilactaene F. The pathway begins with the hybrid PKS-NRPS synthetase LUC5 which is responsible for the condensation of one acetyl-coenzyme A (CoA) unit with six malonyl-CoA units and the amide linkage of the arising heptaketide and homoserine, subsequently releasing the first intermediate prelucilactaene B. Both the cytochrome P450 monooxygenase LUC2 and the hydrolase LUC6 function in parallel in modification of prelucilactaene B. LUC6 may catalyze the 2-pyrrolidone ring formation to form prelucilactaene C from prelucilactaene B, followed by C-15 hydroxylation by the same enzyme to give prelucilactaene D, which is then converted to prelucilactaene E by epoxidation, and finally to prelucilactaene F by cyclization. Prelucilactane D, prelucilactaene E, and prelucilactaene F can be converted to dihydrolucilactaene, NG391, and lucilactaene, respectively, via C-20 methyl group hydroxylation by the cytochrome P450 monooxygenase LUC2. However, LUC2, unlike FUS8 in fusarin C biosynthesis, is not enough for the full oxidation of the C-20 methyl group into carboxylic acid, which is a prerequisite for the final methylation step. The aldehyde dehydrogenase LUC3 is involved in the biosynthesis by further oxidation of the C-20 alcoholic analog prelucilactaene G into a carboxylic derivative. This unidentified carboxylic derivative may be converted to demethyllucilactaene. As the last step, the methyltransferase LUC1 methylates the hydroxyl group at C-21 of demethyllucilactaene to generate lucilactaene. This chain is Hydrolase LUC6, found in Fusarium sp.